The sequence spans 1801 residues: U3 small nucleolar RNA-associated protein 10 (1801 aa).

The HEAT 1 repeat unit spans residues 582 to 619 (IDFQALVPFVLVALGDVSERIRREAAAVLAALGALYKK). The next 2 helical transmembrane spans lie at 945-965 (IQSGMSYLLSLALGSLLAIVN) and 1001-1021 (ALLLVAGLSVIAPELVLHSVM). 4 HEAT repeats span residues 1045 to 1082 (QTIDQVVPALIQSLRNQKRDVVSGTSELLLSFTAAFEH), 1252 to 1289 (LSLIDFLDTIEILLQRPGDELRRKVLRLLEGRLRQNPE), 1296 to 1334 (NRMLDFLPTLVTIVESSPDILLKHAAVACIDRITEKYGK), and 1757 to 1794 (ALLPEMLPYISELMEDEDENVEREVRRWVKQIEDVLGE).

It belongs to the HEATR1/UTP10 family. Component of the ribosomal small subunit (SSU) processome.

The protein localises to the nucleus. It localises to the nucleolus. It is found in the membrane. Functionally, involved in nucleolar processing of pre-18S ribosomal RNA. Involved in ribosome biosynthesis. The sequence is that of U3 small nucleolar RNA-associated protein 10 from Aspergillus terreus (strain NIH 2624 / FGSC A1156).